A 98-amino-acid chain; its full sequence is Serine protease inhibitor Kazal-type 14 (98 aa).

The signal sequence occupies residues Met1–Ala23. One can recognise a Kazal-like domain in the interval Gly35–Cys98. 3 cysteine pairs are disulfide-bonded: Cys41-Cys80, Cys58-Cys77, and Cys66-Cys98. A glycan (N-linked (GlcNAc...) asparagine) is linked at Asn52.

The protein resides in the secreted. Its function is as follows. May be a serine protease inhibitor. The sequence is that of Serine protease inhibitor Kazal-type 14 (Spink14) from Rattus norvegicus (Rat).